Consider the following 84-residue polypeptide: Acyl carrier protein (84 aa).

In terms of domain architecture, Carrier spans 4 to 80; the sequence is SETFEKVKKI…EAVDYINNQV (77 aa). S40 carries the post-translational modification O-(pantetheine 4'-phosphoryl)serine.

This sequence belongs to the acyl carrier protein (ACP) family. Post-translationally, 4'-phosphopantetheine is transferred from CoA to a specific serine of apo-ACP by AcpS. This modification is essential for activity because fatty acids are bound in thioester linkage to the sulfhydryl of the prosthetic group.

Its subcellular location is the cytoplasm. It participates in lipid metabolism; fatty acid biosynthesis. Carrier of the growing fatty acid chain in fatty acid biosynthesis. The sequence is that of Acyl carrier protein from Nostoc sp. (strain PCC 7120 / SAG 25.82 / UTEX 2576).